A 286-amino-acid polypeptide reads, in one-letter code: 4-diphosphocytidyl-2-C-methyl-D-erythritol kinase (286 aa).

The active site involves K10. 100–110 (PMGSGLGGGSS) serves as a coordination point for ATP. The active site involves D142.

It belongs to the GHMP kinase family. IspE subfamily. As to quaternary structure, homodimer.

It catalyses the reaction 4-CDP-2-C-methyl-D-erythritol + ATP = 4-CDP-2-C-methyl-D-erythritol 2-phosphate + ADP + H(+). It functions in the pathway isoprenoid biosynthesis; isopentenyl diphosphate biosynthesis via DXP pathway; isopentenyl diphosphate from 1-deoxy-D-xylulose 5-phosphate: step 3/6. Functionally, catalyzes the phosphorylation of the position 2 hydroxy group of 4-diphosphocytidyl-2C-methyl-D-erythritol. This chain is 4-diphosphocytidyl-2-C-methyl-D-erythritol kinase, found in Buchnera aphidicola subsp. Acyrthosiphon pisum (strain APS) (Acyrthosiphon pisum symbiotic bacterium).